The following is a 196-amino-acid chain: Large ribosomal subunit protein mL66 (196 aa).

Residues 1 to 34 (MAALKALVSGCGRLLRGLLAGPAATSWSRLPARG) constitute a mitochondrion transit peptide.

It belongs to the bacterial ribosomal protein bS18 family. Mitochondrion-specific ribosomal protein mL66 subfamily. In terms of assembly, component of the mitochondrial large ribosomal subunit (mt-LSU). Mature mammalian 55S mitochondrial ribosomes consist of a small (28S) and a large (39S) subunit. The 28S small subunit contains a 12S ribosomal RNA (12S mt-rRNA) and 30 different proteins. The 39S large subunit contains a 16S rRNA (16S mt-rRNA), a copy of mitochondrial valine transfer RNA (mt-tRNA(Val)), which plays an integral structural role, and 52 different proteins. mL66 forms a zinc-binding site with uL10m.

Its subcellular location is the mitochondrion. The sequence is that of Large ribosomal subunit protein mL66 (MRPS18A) from Homo sapiens (Human).